A 1251-amino-acid chain; its full sequence is MAGKLRKSHIPGVSIWQLVEEIPEGCSTPDFEQKPVTSALPEGKNAVFRAVVCGEPRPEVRWQNSKGDLSDSSKYKISSSPGSKEHVLQINKLTGEDTDLYRCTAVNAYGEAACSVRLTVIEVGFRKNRKRHREPQEDLRKELMDFRKLLKKRAPPAPKKKMDLEQIWQLLMTADRKDYEKICLKYGIVDYRGMLRRLQEMKKEQEDKMAQYINTISSLRHIRVTKDGNAKFDLELDLKDSQSKIYLYKDGEMIPYGFNNQTKHCLRRLGKRYEFQIQDLRPEDSGIYQVKVEDAVVFSTELEASAIPPRVVVPLAETHCEEQGDAVFECTLSSPCPSAAWHFRHRLLHPSDKYEVYVSPDGLTHRLVVRGARFSDMGPYSLGTGLYTSSAWLVVEAGKDKDLQSTSADHKLQSRRSGKDGRLDIYGERRDATRSSTSRYKPGTGSFSKDAQGPMGHFSQGLADMEVQPGEAATLSCTLTSDLGPGTWFKDGVKLTTQDGVIFKQDGLVHSLFITHVQGTQAGRYTFVAGDQQSEATLTVQDSPTIAPDVTEKLREPLVVKAGKPVIVKIPFQSHLPIQAAWRKDGAEVVGSSDREAQVDLGDGYTRLCLPSAGRKDCGQYSVTLRSEGGSVQAELTLQVIDKPDPPQGPMEVQDCHRAGVCLRWRPPRDNGGRTVECYVVERRQAGRSTWLKVGEAPADSTTFTDAHVEPGRKYTFRVRAVTSEGAGEALESEEILVAPEALPKAPSAPAILSASSQGITLTWTAPRGPGSAHILGYLIERRKKGSNTWTAVNDQPVPERRWTVADVRQGCQYEFRVTAVAPSGPGEPGPPSDAVFARDPMRPPGLVRNLQVTDRSNTSITLSWAGPDTQEGDEAQGYVVELCSSDSLQWLPCHVGTVPVTTYTAKGLRPGEGYFVRVTAVNEGGQSQPSALDTLVQAMPVTVCPKFLVDSSTKDLLTVKVGDTVRVPVSFEAMPMPEVTWLKDGLPLPKRSVTVTKDGLTQLLIPVAGLSDSGLYTVVLRTLQGKEVAHSFRIRVAACPQAPGPIHLQENVPGTVTAEWEPSPDEAQDVPLHYAVFTRSSAHGPWHEAADRIHTNRFTLLGILPGHEYHFRVVAKNELGASKPSDTSQPWCIPRQRDRFTVKAPCYREPDLSQKPRFLVGLRSHLLPQGCECCMSCAVQGSPRPHVTWFKNDRSLEGNPAVYSTDLLGVCSLTIPSVSPKDSGEYKAVAENTLGQAVSTATLIVIEPST.

Residues 29-119 (PDFEQKPVTS…GEAACSVRLT (91 aa)) enclose the Ig-like 1 domain. The interval 61–81 (RWQNSKGDLSDSSKYKISSSP) is disordered. The stretch at 188–221 (IVDYRGMLRRLQEMKKEQEDKMAQYINTISSLRH) forms a coiled coil. An Ig-like 2 domain is found at 309–398 (PRVVVPLAET…SSAWLVVEAG (90 aa)). A compositionally biased stretch (basic and acidic residues) spans 403 to 433 (LQSTSADHKLQSRRSGKDGRLDIYGERRDAT). A disordered region spans residues 403–454 (LQSTSADHKLQSRRSGKDGRLDIYGERRDATRSSTSRYKPGTGSFSKDAQGP). A compositionally biased stretch (polar residues) spans 434–449 (RSSTSRYKPGTGSFSK). In terms of domain architecture, Ig-like 3 spans 454 to 539 (PMGHFSQGLA…GDQQSEATLT (86 aa)). 3 consecutive Fibronectin type-III domains span residues 646 to 741 (PPQG…VAPE), 746 to 845 (APSA…MRPP), and 847 to 942 (LVRN…AMPV). Residues 946 to 1030 (PKFLVDSSTK…LRTLQGKEVA (85 aa)) enclose the Ig-like 4 domain. In terms of domain architecture, Fibronectin type-III 4 spans 1043–1137 (APGPIHLQEN…TSQPWCIPRQ (95 aa)). The region spanning 1151-1245 (PDLSQKPRFL…GQAVSTATLI (95 aa)) is the Ig-like 5 domain.

As to quaternary structure, interacts with FLNC. Interacts with KY. Expressed in skeletal muscle.

Its subcellular location is the nucleus. It is found in the cytoplasm. It localises to the myofibril. The protein localises to the sarcomere. The protein resides in the z line. The sequence is that of Immunoglobulin-like and fibronectin type III domain-containing protein 1 (IGFN1) from Homo sapiens (Human).